Reading from the N-terminus, the 669-residue chain is Translation factor GUF1, mitochondrial (669 aa).

The N-terminal 49 residues, 1 to 49, are a transit peptide targeting the mitochondrion; the sequence is MWTLVGRGWGCARALAPRATGAALLVAPGPRSAPTLGAAPESWATDRLY. Residues 66 to 247 form the tr-type G domain; sequence ENIRNFSIVA…AIIERIPPPK (182 aa). GTP-binding positions include 75–82, 140–144, and 194–197; these read AHVDHGKS, DTPGH, and NKID.

Belongs to the TRAFAC class translation factor GTPase superfamily. Classic translation factor GTPase family. LepA subfamily.

It localises to the mitochondrion inner membrane. The enzyme catalyses GTP + H2O = GDP + phosphate + H(+). Promotes mitochondrial protein synthesis. May act as a fidelity factor of the translation reaction, by catalyzing a one-codon backward translocation of tRNAs on improperly translocated ribosomes. Binds to mitochondrial ribosomes in a GTP-dependent manner. This chain is Translation factor GUF1, mitochondrial, found in Homo sapiens (Human).